Reading from the N-terminus, the 198-residue chain is Large ribosomal subunit protein uL13 (198 aa).

Belongs to the universal ribosomal protein uL13 family.

The chain is Large ribosomal subunit protein uL13 (RPL13A) from Tetrahymena thermophila (strain SB210).